The following is a 456-amino-acid chain: Hydroxyproline dehydrogenase (456 aa).

An N6-acetyllysine mark is found at Lys310 and Lys320.

This sequence belongs to the proline oxidase family. Requires FAD as cofactor.

The catalysed reaction is trans-4-hydroxy-L-proline + a quinone = (3R,5S)-1-pyrroline-3-hydroxy-5-carboxylate + a quinol + H(+). It carries out the reaction L-proline + a quinone = (S)-1-pyrroline-5-carboxylate + a quinol + H(+). Dehydrogenase that converts trans-4-L-hydroxyproline to delta-1-pyrroline-3-hydroxy-5-carboxylate (Hyp) using ubiquinone-10 as the terminal electron acceptor. Can also use proline as a substrate but with a very much lower efficiency. Does not react with other diastereomers of Hyp: trans-4-D-hydroxyproline and cis-4-L-hydroxyproline. Ubiquininone analogs such as menadione, duroquinone and ubiquinone-1 react more efficiently than oxygen as the terminal electron acceptor during catalysis. The protein is Hydroxyproline dehydrogenase of Rattus norvegicus (Rat).